A 514-amino-acid chain; its full sequence is Glutamate--cysteine ligase, chloroplastic (514 aa).

A chloroplast-targeting transit peptide spans 1–55 (MALLSQAGGAYTVPSGHVSSRTGTKTVSGCVNVLRMKETYVSSYSRTLSTKSMLK). 2 disulfide bridges follow: C178-C398 and C341-C356.

This sequence belongs to the carboxylate-amine ligase family. Glutamate--cysteine ligase type 2 subfamily. Homodimer or monomer when oxidized or reduced, respectively. Post-translationally, the Cys-178-Cys-398 disulfide bridge is known to modulate the enzyme activity according to the redox status. The oxidized form constitutes the active enzyme.

It localises to the plastid. Its subcellular location is the chloroplast. The catalysed reaction is L-cysteine + L-glutamate + ATP = gamma-L-glutamyl-L-cysteine + ADP + phosphate + H(+). It participates in sulfur metabolism; glutathione biosynthesis; glutathione from L-cysteine and L-glutamate: step 1/2. Functionally, participates in the detoxification process. The sequence is that of Glutamate--cysteine ligase, chloroplastic (GSH1) from Brassica juncea (Indian mustard).